Reading from the N-terminus, the 193-residue chain is Holliday junction branch migration complex subunit RuvA (193 aa).

Residues 1–63 (MIAHIQGKLV…EDSHSLYGFA (63 aa)) form a domain I region. A domain II region spans residues 64–142 (EKSEKEIFKL…KLYDLDQVSI (79 aa)). A flexible linker region spans residues 143-145 (SQS). The tract at residues 145–193 (SNTNKDEALSALEVLGFIRKSAEKVVEKIVATMPDATVETIIKQALKNL) is domain III.

The protein belongs to the RuvA family. As to quaternary structure, homotetramer. Forms an RuvA(8)-RuvB(12)-Holliday junction (HJ) complex. HJ DNA is sandwiched between 2 RuvA tetramers; dsDNA enters through RuvA and exits via RuvB. An RuvB hexamer assembles on each DNA strand where it exits the tetramer. Each RuvB hexamer is contacted by two RuvA subunits (via domain III) on 2 adjacent RuvB subunits; this complex drives branch migration. In the full resolvosome a probable DNA-RuvA(4)-RuvB(12)-RuvC(2) complex forms which resolves the HJ.

It is found in the cytoplasm. In terms of biological role, the RuvA-RuvB-RuvC complex processes Holliday junction (HJ) DNA during genetic recombination and DNA repair, while the RuvA-RuvB complex plays an important role in the rescue of blocked DNA replication forks via replication fork reversal (RFR). RuvA specifically binds to HJ cruciform DNA, conferring on it an open structure. The RuvB hexamer acts as an ATP-dependent pump, pulling dsDNA into and through the RuvAB complex. HJ branch migration allows RuvC to scan DNA until it finds its consensus sequence, where it cleaves and resolves the cruciform DNA. The protein is Holliday junction branch migration complex subunit RuvA of Flavobacterium psychrophilum (strain ATCC 49511 / DSM 21280 / CIP 103535 / JIP02/86).